The primary structure comprises 341 residues: tRNA N6-adenosine threonylcarbamoyltransferase (341 aa).

2 residues coordinate Fe cation: histidine 111 and histidine 115. Residues 134–138 (LVSGG), aspartate 167, glycine 180, and asparagine 276 contribute to the substrate site. Aspartate 304 provides a ligand contact to Fe cation.

Belongs to the KAE1 / TsaD family. It depends on Fe(2+) as a cofactor.

It localises to the cytoplasm. The catalysed reaction is L-threonylcarbamoyladenylate + adenosine(37) in tRNA = N(6)-L-threonylcarbamoyladenosine(37) in tRNA + AMP + H(+). Required for the formation of a threonylcarbamoyl group on adenosine at position 37 (t(6)A37) in tRNAs that read codons beginning with adenine. Is involved in the transfer of the threonylcarbamoyl moiety of threonylcarbamoyl-AMP (TC-AMP) to the N6 group of A37, together with TsaE and TsaB. TsaD likely plays a direct catalytic role in this reaction. This is tRNA N6-adenosine threonylcarbamoyltransferase from Pseudomonas putida (strain W619).